The chain runs to 416 residues: Gamma-glutamyl phosphate reductase (416 aa).

Belongs to the gamma-glutamyl phosphate reductase family.

It localises to the cytoplasm. The enzyme catalyses L-glutamate 5-semialdehyde + phosphate + NADP(+) = L-glutamyl 5-phosphate + NADPH + H(+). It participates in amino-acid biosynthesis; L-proline biosynthesis; L-glutamate 5-semialdehyde from L-glutamate: step 2/2. Functionally, catalyzes the NADPH-dependent reduction of L-glutamate 5-phosphate into L-glutamate 5-semialdehyde and phosphate. The product spontaneously undergoes cyclization to form 1-pyrroline-5-carboxylate. The polypeptide is Gamma-glutamyl phosphate reductase (Vibrio atlanticus (strain LGP32) (Vibrio splendidus (strain Mel32))).